The sequence spans 77 residues: MSSIDKRIKEIVAEQLGVDEGQVTNEASFMDDLGADSLDTVELVMALEEEFDIEISDEDAEKIQSVQDAIDYITDHT.

Residues 2–77 (SSIDKRIKEI…DAIDYITDHT (76 aa)) form the Carrier domain. O-(pantetheine 4'-phosphoryl)serine is present on S37.

The protein belongs to the acyl carrier protein (ACP) family. Post-translationally, 4'-phosphopantetheine is transferred from CoA to a specific serine of apo-ACP by AcpS. This modification is essential for activity because fatty acids are bound in thioester linkage to the sulfhydryl of the prosthetic group.

Its subcellular location is the cytoplasm. The protein operates within lipid metabolism; fatty acid biosynthesis. Carrier of the growing fatty acid chain in fatty acid biosynthesis. The sequence is that of Acyl carrier protein from Geotalea uraniireducens (strain Rf4) (Geobacter uraniireducens).